The following is a 704-amino-acid chain: Polyribonucleotide nucleotidyltransferase 4 (704 aa).

Mg(2+) is bound by residues aspartate 483 and aspartate 489. In terms of domain architecture, KH spans proline 550–isoleucine 609. An S1 motif domain is found at glycine 619 to lysine 687.

Belongs to the polyribonucleotide nucleotidyltransferase family. It depends on Mg(2+) as a cofactor.

The protein localises to the cytoplasm. The catalysed reaction is RNA(n+1) + phosphate = RNA(n) + a ribonucleoside 5'-diphosphate. Its function is as follows. Involved in mRNA degradation. Catalyzes the phosphorolysis of single-stranded polyribonucleotides processively in the 3'- to 5'-direction. This is Polyribonucleotide nucleotidyltransferase 4 from Alkaliphilus metalliredigens (strain QYMF).